The primary structure comprises 509 residues: Maturase K (509 aa).

The protein belongs to the intron maturase 2 family. MatK subfamily.

It is found in the plastid. The protein localises to the chloroplast. In terms of biological role, usually encoded in the trnK tRNA gene intron. Probably assists in splicing its own and other chloroplast group II introns. The polypeptide is Maturase K (Amentotaxus argotaenia (Chinese flowering yew)).